A 409-amino-acid chain; its full sequence is Serine protease inhibitor 2 (409 aa).

Positions 1–21 are cleaved as a signal peptide; that stretch reads MNKLNFVILCLAALLVFDATA. N294 and N324 each carry an N-linked (GlcNAc...) asparagine glycan. The Hinge region; required for binding to peptidase motif lies at 356–360; the sequence is LGSEA.

Belongs to the serpin family. Forms a covalent heterodimer with protease CLIPB9; the interaction inhibits CLIPB9 protease activity. Forms a covalent heterodimer with protease CLIPB10; the interaction inhibits CLIPB10 catalytic activity. Interacts with CLIPB4 in the hemolymph of immune-challenged female mosquitoes; the interaction results in CLIPB4 inhibition. Protease CLIPB9 binds to SRPN2 via the hinge region resulting in the cleavage of the reactive bond. This leads to a conformational change in SRPN2 which traps CLIPB9 and distorts its active site, resulting in CLIPB9 inactivation.

The protein resides in the secreted. Functionally, serine protease inhibitor that functions in the melanization-mediated immune response. By preventing the activation of phenoloxidases through the inhibiting of serine proteases CLIPB9, CLIPB10 and CLIPB4, negatively regulates melanization in the hemolymph. By preventing melanization, has a detrimental role during P.berghei parasite mediated-infection and invasion of the mosquito midgut. This chain is Serine protease inhibitor 2, found in Anopheles gambiae (African malaria mosquito).